We begin with the raw amino-acid sequence, 120 residues long: UPF0231 protein Ent638_0667 (120 aa).

It belongs to the UPF0231 family.

This is UPF0231 protein Ent638_0667 from Enterobacter sp. (strain 638).